A 280-amino-acid polypeptide reads, in one-letter code: Probable endonuclease 4 (280 aa).

Zn(2+)-binding residues include histidine 69, histidine 109, glutamate 145, aspartate 179, histidine 182, histidine 216, aspartate 229, histidine 231, and glutamate 261.

The protein belongs to the AP endonuclease 2 family. Requires Zn(2+) as cofactor.

It catalyses the reaction Endonucleolytic cleavage to 5'-phosphooligonucleotide end-products.. Functionally, endonuclease IV plays a role in DNA repair. It cleaves phosphodiester bonds at apurinic or apyrimidinic (AP) sites, generating a 3'-hydroxyl group and a 5'-terminal sugar phosphate. The polypeptide is Probable endonuclease 4 (Photorhabdus laumondii subsp. laumondii (strain DSM 15139 / CIP 105565 / TT01) (Photorhabdus luminescens subsp. laumondii)).